We begin with the raw amino-acid sequence, 463 residues long: MSNLGKVIQIIGPIIDIKFDSENLPDLFNALEINAGDRKVIAEVEQHIGDDTIRAIAMEDTEGLKRGMEALDTGKSVSVPVGKEVLGRLFNVLGKPIDGAGEFISEESYPIHRPAPSFEEQSVEPEIFETGIKVIDLLAPYQKGGKIGLFGGAGVGKTVLIQELINNIAKEHGGLSVFTGVGERTREGNDLYYEMKESGVLEKTALVFGQMNEPPGARMRVALTGLTMSEYFRDQGQDVLLFIDNIFRFTQAGSEVSALLGRIPSAVGYQPTLATEMGALQERITSTKNGSITSVQAVYVPADDLTDPAPATTFAHLDATTVLSRSITELGIYPAVDPLESSSRMLDPRIIGEEHYEVAIKVKNILERYRELQDIIAILGIDELSEEDKLVVGRARKIQRFLSQPFTVAEQFTGMQGKYVPIKETVRGFKEILEGKHDNIPESAFLFQGTIEDVLKKAQQMEI.

151–158 (GGAGVGKT) provides a ligand contact to ATP.

Belongs to the ATPase alpha/beta chains family. F-type ATPases have 2 components, CF(1) - the catalytic core - and CF(0) - the membrane proton channel. CF(1) has five subunits: alpha(3), beta(3), gamma(1), delta(1), epsilon(1). CF(0) has three main subunits: a(1), b(2) and c(9-12). The alpha and beta chains form an alternating ring which encloses part of the gamma chain. CF(1) is attached to CF(0) by a central stalk formed by the gamma and epsilon chains, while a peripheral stalk is formed by the delta and b chains.

It localises to the cell membrane. The enzyme catalyses ATP + H2O + 4 H(+)(in) = ADP + phosphate + 5 H(+)(out). In terms of biological role, produces ATP from ADP in the presence of a proton gradient across the membrane. The catalytic sites are hosted primarily by the beta subunits. The protein is ATP synthase subunit beta of Clostridium botulinum (strain ATCC 19397 / Type A).